The chain runs to 614 residues: MPEYRSSTTTKGRNMAGARALWRATGMKTEDFSKPIIAVVNSFTQFVPGHVHLKDLGQLVCREIEAAGGVAKEFNTIAVDDGIAMGHDGMLYSLPSREIIADSVEYMANAHCADALVCISNCDKITPGMLMAALRLNIPAIFVSGGPMEAGKTKLSEHKLDLVDAMVIAADSSASDELTEEYERSACPTCGSCSGMFTANSMNCLTEAIGLSLPGNGTTLATHSDREQLFLTAARRIVDLTKRYYQDEDTSVLPRSIASFKAFENAMTLDIAMGGSTNTILHLLAAAQEAEVDFSMTHIDHLSRKVGQFCKVAPNTPKYHIEDVHRAGGIMAILGELDRAGLLHTDVPTVHSDTMKDALDAWDVMRNNDPELHKFFKAGPAGIPTQQAFSQSTRWSSLDLDRENGCIRSAEHAFSKEGGLAVLYGNIAEDGCIVKTAGVDESILLFKGKARIFESQDDAVKGILNDQVKEGDVVIIRYEGPKGGPGMQEMLYPTSYLKSKGLGKACALLTDGRFSGGTSGLSIGHCSPEAAAGGAIGLIEEGDEIIIDIPNRGINVSLTPEQLKARRQAMEAKGADAWKPAQPRPRKVTTALKAYALLATSADKGAVRDKELLK.

Residue aspartate 81 coordinates Mg(2+). Cysteine 122 contacts [2Fe-2S] cluster. Residues aspartate 123 and lysine 124 each coordinate Mg(2+). An N6-carboxylysine modification is found at lysine 124. Cysteine 193 is a binding site for [2Fe-2S] cluster. Position 489 (glutamate 489) interacts with Mg(2+). The Proton acceptor role is filled by serine 515.

The protein belongs to the IlvD/Edd family. In terms of assembly, homodimer. [2Fe-2S] cluster serves as cofactor. Mg(2+) is required as a cofactor.

It carries out the reaction (2R)-2,3-dihydroxy-3-methylbutanoate = 3-methyl-2-oxobutanoate + H2O. It catalyses the reaction (2R,3R)-2,3-dihydroxy-3-methylpentanoate = (S)-3-methyl-2-oxopentanoate + H2O. It participates in amino-acid biosynthesis; L-isoleucine biosynthesis; L-isoleucine from 2-oxobutanoate: step 3/4. The protein operates within amino-acid biosynthesis; L-valine biosynthesis; L-valine from pyruvate: step 3/4. Functions in the biosynthesis of branched-chain amino acids. Catalyzes the dehydration of (2R,3R)-2,3-dihydroxy-3-methylpentanoate (2,3-dihydroxy-3-methylvalerate) into 2-oxo-3-methylpentanoate (2-oxo-3-methylvalerate) and of (2R)-2,3-dihydroxy-3-methylbutanoate (2,3-dihydroxyisovalerate) into 2-oxo-3-methylbutanoate (2-oxoisovalerate), the penultimate precursor to L-isoleucine and L-valine, respectively. The protein is Dihydroxy-acid dehydratase of Hahella chejuensis (strain KCTC 2396).